Reading from the N-terminus, the 91-residue chain is Large ribosomal subunit protein bL31B (91 aa).

It belongs to the bacterial ribosomal protein bL31 family. Type B subfamily. In terms of assembly, part of the 50S ribosomal subunit.

This is Large ribosomal subunit protein bL31B from Mycolicibacterium vanbaalenii (strain DSM 7251 / JCM 13017 / BCRC 16820 / KCTC 9966 / NRRL B-24157 / PYR-1) (Mycobacterium vanbaalenii).